Consider the following 386-residue polypeptide: Hydrazine synthase subunit beta (386 aa).

An N-terminal signal peptide occupies residues 1–34 (MVIRRKMNKMIRKGMIGAVMLGAAVAISGGVATA).

In terms of assembly, part of the hydrazine synthase complex that forms an elongated dimer of heterotrimers composed of one alpha, one beta and one gamma subunit.

The protein localises to the anammoxosome. It participates in nitrogen metabolism. Its function is as follows. Component of the hydrazine synthase complex that catalyzes the condensation of nitric oxide (NO) with ammonium to form hydrazine. The beta subunit may play a role in modulating transport of the hydroxylamine intermediate through a tunnel between the gamma and alpha subunit's active site. Is involved in anaerobic ammonium oxidation (anammox), a biological process in which nitrite is used as the electron acceptor in the conversion of ammonium to dinitrogen gas (N2) and water; this bacterial process has a major role in the Earth's nitrogen cycle and has been estimated to synthesize up to 50% of the dinitrogen gas emitted into our atmosphere from the oceans. The polypeptide is Hydrazine synthase subunit beta (Kuenenia stuttgartiensis).